A 549-amino-acid polypeptide reads, in one-letter code: Mitogen-activated protein kinase 15 (549 aa).

Positions 1–20 (MCAAEVDRHVAQRYLIKRRL) are ubiquitin-conjugating. One can recognise a Protein kinase domain in the interval 14-305 (YLIKRRLGKG…AEQALQHPYV (292 aa)). Residues 20–28 (LGKGAYGIV) and Lys-43 each bind ATP. The active-site Proton acceptor is Asp-138. Residue Thr-176 is modified to Phosphothreonine. Residues 176–178 (TEY) carry the TXY motif. Tyr-178 carries the phosphotyrosine modification. Positions 266–286 (LDALLPPDTPPEALDLLKRLL) are necessary to interact with ESRRA, to regulate its subcellular localization and to inhibit its transcriptional activity. A requires for interaction with GABARAP, MAP1LC3B AND GABARAPL1 region spans residues 301 to 382 (QHPYVQRFHC…ARTQSLKSGV (82 aa)). Positions 370 to 507 (ASPARTQSLK…PEPRPGRRMF (138 aa)) are disordered. PXXXP motif repeat units follow at residues 380–384 (SGVLP) and 387–391 (PAETP). PXXXP motif; regulates binding with chromatin and interaction with PCNA repeat units lie at residues 395-399 (RGPKP) and 403-407 (PGHDP). Basic and acidic residues predominate over residues 403-416 (PGHDPEHVEVRRQS). Omega-N-methylarginine is present on Arg-451. The span at 456–467 (SLTSQAEAQAAN) shows a compositional bias: polar residues. Low complexity predominate over residues 483–492 (AVGARRVPSR). Residues 493 to 502 (LPREAPEPRP) show a composition bias toward basic and acidic residues.

It belongs to the protein kinase superfamily. CMGC Ser/Thr protein kinase family. MAP kinase subfamily. Interacts with TGFB1I1. Interacts with CSK/c-Src, ABL1 and RET. Interacts with GABARAP, MAP1LC3B and GABARAPL1; controls, in a kinase-dependent fashion, both basal and starvation-induced autophagy. Interacts with ESRRA; promotes re-localization of ESRRA to the cytoplasm through a XPO1-dependent mechanism then inhibits ESRRA transcriptional activity. Interacts with PCNA; the interaction is chromatin binding- and kinase activity-dependent and prevents MDM2-mediated PCNA destruction by inhibiting the association of PCNA with MDM2. Interacts with DVL2. Interacts with CLIC3; MAPK15 does not phosphorylates CLIC3. Autophosphorylated on Thr-176 and Tyr-178; activates the enzyme. In terms of processing, ubiquitinated. Ubiquitination may allow its tight kinase activity regulation and rapid turnover. May be ubiquitinated by a SCF E3 ligase. As to expression, expressed at all stages of oocyte meiotic maturation.

It is found in the cytoplasm. It localises to the cytoskeleton. The protein localises to the cilium basal body. Its subcellular location is the cell junction. The protein resides in the tight junction. It is found in the microtubule organizing center. It localises to the centrosome. The protein localises to the centriole. Its subcellular location is the cytoplasmic vesicle. The protein resides in the autophagosome. It is found in the golgi apparatus. It localises to the nucleus. The protein localises to the spindle. It catalyses the reaction L-seryl-[protein] + ATP = O-phospho-L-seryl-[protein] + ADP + H(+). The enzyme catalyses L-threonyl-[protein] + ATP = O-phospho-L-threonyl-[protein] + ADP + H(+). Its activity is regulated as follows. Activated by threonine and tyrosine phosphorylation. Inhibited by dual specificity phosphatases, such as DUSP1. Phosphorylation and activation in response to DNA damaging agents, serum stimulation. Constitutively activated when phosphorylated on Tyr-178. Activity depends on the relative rates of MAPK15 autophosphorylation and dephosphorylation by PTPN1. Atypical MAPK protein that regulates several process such as autophagy, ciliogenesis, protein trafficking/secretion and genome integrity, in a kinase activity-dependent manner. Controls both, basal and starvation-induced autophagy throught its interaction with GABARAP, MAP1LC3B and GABARAPL1 leading to autophagosome formation, SQSTM1 degradation and reduced MAP1LC3B inhibitory phosphorylation. Regulates primary cilium formation and the localization of ciliary proteins involved in cilium structure, transport, and signaling. Prevents the relocation of the sugar-adding enzymes from the Golgi to the endoplasmic reticulum, thereby restricting the production of sugar-coated proteins. Upon amino-acid starvation, mediates transitional endoplasmic reticulum site disassembly and inhibition of secretion. Binds to chromatin leading to MAPK15 activation and interaction with PCNA, that which protects genomic integrity by inhibiting MDM2-mediated degradation of PCNA. Regulates DA transporter (DAT) activity and protein expression via activation of RhoA. In response to H(2)O(2) treatment phosphorylates ELAVL1, thus preventing it from binding to the PDCD4 3'UTR and rendering the PDCD4 mRNA accessible to miR-21 and leading to its degradation and loss of protein expression. Also functions in a kinase activity-independent manner as a negative regulator of growth. Phosphorylates in vitro FOS and MBP. During oocyte maturation, plays a key role in the microtubule organization and meiotic cell cycle progression in oocytes, fertilized eggs, and early embryos. Interacts with ESRRA promoting its re-localization from the nucleus to the cytoplasm and then prevents its transcriptional activity. The polypeptide is Mitogen-activated protein kinase 15 (Mus musculus (Mouse)).